The chain runs to 204 residues: MQKFTTFTSIAIPLKRANIDTDAIIPKQFLKSIKRSGFGANLFDEWRYLDHGEIGMDNSKRPLNMDFVLNQPKYQNAKILLVLKNFGCGSSREHAPWALKDYGFKTIIAPSFADIFYNNCFKNGILPIVQNNNVMDELFSSTDKITINLDAQSININNKNYPFEIDIERKTHLINGLDDISLTLQYINDIKAFEKHYFNKYDWL.

This sequence belongs to the LeuD family. LeuD type 1 subfamily. In terms of assembly, heterodimer of LeuC and LeuD.

It carries out the reaction (2R,3S)-3-isopropylmalate = (2S)-2-isopropylmalate. It functions in the pathway amino-acid biosynthesis; L-leucine biosynthesis; L-leucine from 3-methyl-2-oxobutanoate: step 2/4. Catalyzes the isomerization between 2-isopropylmalate and 3-isopropylmalate, via the formation of 2-isopropylmaleate. This is 3-isopropylmalate dehydratase small subunit from Vesicomyosocius okutanii subsp. Calyptogena okutanii (strain HA).